The following is a 253-amino-acid chain: Hydroxypyruvate/pyruvate aldolase (253 aa).

Histidine 48 serves as the catalytic Proton acceptor. Glutamate 151 and aspartate 177 together coordinate a divalent metal cation.

Belongs to the HpcH/HpaI aldolase family. The cofactor is a divalent metal cation.

It carries out the reaction D-glyceraldehyde + pyruvate = 2-dehydro-3-deoxy-L-galactonate. Functionally, aldolase which can catalyze in vitro the aldolisation reaction between hydroxypyruvate (HPA) or pyruvate (PA) and D-glyceraldehyde (D-GA). The condensation of pyruvate and D-glyceraldehyde produces 2-dehydro-3-deoxy-L-galactonate. Has weak activity with hydroxypyruvate and D-glyceraldehyde. In Sagittula stellata (strain ATCC 700073 / DSM 11524 / E-37), this protein is Hydroxypyruvate/pyruvate aldolase.